The chain runs to 431 residues: 3-phosphoshikimate 1-carboxyvinyltransferase (431 aa).

3-phosphoshikimate-binding residues include Lys26, Ser27, and Arg31. A phosphoenolpyruvate-binding site is contributed by Lys26. Gly99 and Arg127 together coordinate phosphoenolpyruvate. Ser170, Ser171, Gln172, Ser199, Glu314, and His343 together coordinate 3-phosphoshikimate. A phosphoenolpyruvate-binding site is contributed by Gln172. The active-site Proton acceptor is the Glu314. Arg347, Arg388, and Lys413 together coordinate phosphoenolpyruvate.

The protein belongs to the EPSP synthase family. As to quaternary structure, monomer.

The protein localises to the cytoplasm. The enzyme catalyses 3-phosphoshikimate + phosphoenolpyruvate = 5-O-(1-carboxyvinyl)-3-phosphoshikimate + phosphate. It participates in metabolic intermediate biosynthesis; chorismate biosynthesis; chorismate from D-erythrose 4-phosphate and phosphoenolpyruvate: step 6/7. In terms of biological role, catalyzes the transfer of the enolpyruvyl moiety of phosphoenolpyruvate (PEP) to the 5-hydroxyl of shikimate-3-phosphate (S3P) to produce enolpyruvyl shikimate-3-phosphate and inorganic phosphate. The protein is 3-phosphoshikimate 1-carboxyvinyltransferase of Mycobacterium ulcerans (strain Agy99).